Reading from the N-terminus, the 188-residue chain is UPF0200 protein M1627_1244 (188 aa).

Residue Gly15–Ser22 coordinates ATP.

It belongs to the UPF0200 family.

This chain is UPF0200 protein M1627_1244, found in Saccharolobus islandicus (strain M.16.27) (Sulfolobus islandicus).